Consider the following 237-residue polypeptide: Photosystem I-associated linker protein CpcL (237 aa).

Positions 11-191 (TTQNQRVQSF…DYRDRAGIVR (181 aa)) constitute a PBS-linker domain. A helical membrane pass occupies residues 208-228 (GVAILGVLLAISAGMTFLFVL).

It belongs to the phycobilisome linker protein family. As to quaternary structure, part of a specialized phycobilisome (PBS), a structure that is usually composed of two distinct substructures: a core complex and a number of rods radiating from the core. This protein is part of a core-less PBS rod (called CpcL-PBS). In vegetative cells associated substoichiometrically with photosystem I and phycobiliproteins phycocyanin as well as phycoerythrocyanin in the thylakoid membrane, not found in conventional, hemidiscoidal phycobilisomes.

It localises to the cellular thylakoid membrane. Its function is as follows. Rod linker protein, associated with phycocyanin (PC). Linker polypeptides determine the state of aggregation and the location of the disk-shaped phycobiliprotein units within the phycobilisome (PBS) and modulate their spectroscopic properties in order to mediate a directed and optimal energy transfer. Forms a supercomplex with tetrameric photosystem I (PSI) and PC that allows efficient energy transfer from PC to PSI. This protein seems to be in the middle of the PC hexameric rod and may anchor the PC rods at the periphery of PSI tetramers. May be involved in the cyclic electron transport around PSI that provides ATP needed for N(2) fixation in heterocysts. The protein is Photosystem I-associated linker protein CpcL of Nostoc sp. (strain PCC 7120 / SAG 25.82 / UTEX 2576).